The chain runs to 1157 residues: Probable ATP-dependent RNA helicase DHX37 (1157 aa).

Residues 1-10 show a composition bias toward basic residues; the sequence is MGKLRRRYNI. Disordered regions lie at residues 1–77 and 116–225; these read MGKL…KKEK and TSKL…AAPP. The span at 21-30 shows a compositional bias: pro residues; that stretch reads SKGPPEPPPV. A compositionally biased stretch (acidic residues) spans 159–184; sequence AEEEEEEEEESESELEEESELDEDPA. 2 stretches are compositionally biased toward pro residues: residues 198–208 and 216–225; these read PLPPAPAPSSQ and VPPPPAAAPP. In terms of domain architecture, Helicase ATP-binding spans 262–429; it reads MEAVAEHPIV…PRLFAKPPPV (168 aa). Residue 275–282 participates in ATP binding; the sequence is GETGSGKT. Residues 372-375 carry the DEAH box motif; the sequence is DEAH. The region spanning 459 to 716 is the Helicase C-terminal domain; that stretch reads KVCKIHRMLP…DLILQMKALN (258 aa). Disordered stretches follow at residues 494–523 and 542–584; these read PPSR…SRAR and VLPA…QPDA. Residues 499–515 show a composition bias toward basic and acidic residues; it reads RPQEKDDDQKDSVEEMR. Acidic residues predominate over residues 547-571; it reads EGDEDREAEVDEEEGALDSDLDLDL.

Belongs to the DEAD box helicase family. DEAH subfamily. As to quaternary structure, part of the small subunit (SSU) processome, composed of more than 70 proteins and the RNA chaperone small nucleolar RNA (snoRNA) U3. Interacts with UTP14A. As to expression, expressed in the fallopian tube, ovary, uterus and testis. Also expressed in the brain.

The protein resides in the nucleus. It is found in the nucleolus. The protein localises to the cytoplasm. It localises to the nucleus membrane. The catalysed reaction is ATP + H2O = ADP + phosphate + H(+). Functionally, ATP-binding RNA helicase that plays a role in maturation of the small ribosomal subunit in ribosome biogenesis. Required for the release of the U3 snoRNP from pre-ribosomal particles. Part of the small subunit (SSU) processome, first precursor of the small eukaryotic ribosomal subunit. During the assembly of the SSU processome in the nucleolus, many ribosome biogenesis factors, an RNA chaperone and ribosomal proteins associate with the nascent pre-rRNA and work in concert to generate RNA folding, modifications, rearrangements and cleavage as well as targeted degradation of pre-ribosomal RNA by the RNA exosome. Plays a role in early testis development. Probably also plays a role in brain development. The chain is Probable ATP-dependent RNA helicase DHX37 from Homo sapiens (Human).